The primary structure comprises 362 residues: Phospho-N-acetylmuramoyl-pentapeptide-transferase (362 aa).

Helical transmembrane passes span 28 to 48 (GAVL…IAWL), 75 to 95 (TMGG…WADL), 100 to 120 (VWIV…DDYL), 134 to 154 (AKLV…WSLQ), 170 to 190 (VLLQ…VGAG), 201 to 221 (GLAI…SYLV), 241 to 261 (LAVF…FNAP), 265 to 285 (VFMG…ISVV), 290 to 310 (LVLG…IVQV), and 339 to 359 (TVVI…LATL).

It belongs to the glycosyltransferase 4 family. MraY subfamily. Requires Mg(2+) as cofactor.

The protein localises to the cell inner membrane. It catalyses the reaction UDP-N-acetyl-alpha-D-muramoyl-L-alanyl-gamma-D-glutamyl-meso-2,6-diaminopimeloyl-D-alanyl-D-alanine + di-trans,octa-cis-undecaprenyl phosphate = di-trans,octa-cis-undecaprenyl diphospho-N-acetyl-alpha-D-muramoyl-L-alanyl-D-glutamyl-meso-2,6-diaminopimeloyl-D-alanyl-D-alanine + UMP. It functions in the pathway cell wall biogenesis; peptidoglycan biosynthesis. Catalyzes the initial step of the lipid cycle reactions in the biosynthesis of the cell wall peptidoglycan: transfers peptidoglycan precursor phospho-MurNAc-pentapeptide from UDP-MurNAc-pentapeptide onto the lipid carrier undecaprenyl phosphate, yielding undecaprenyl-pyrophosphoryl-MurNAc-pentapeptide, known as lipid I. The chain is Phospho-N-acetylmuramoyl-pentapeptide-transferase from Paramagnetospirillum magneticum (strain ATCC 700264 / AMB-1) (Magnetospirillum magneticum).